Here is a 148-residue protein sequence, read N- to C-terminus: Large ribosomal subunit protein bL27m (148 aa).

The transit peptide at 1–30 (MALAVLAWRTRTAVIALLSPPQAAALAVRY) directs the protein to the mitochondrion.

The protein belongs to the bacterial ribosomal protein bL27 family. In terms of assembly, component of the mitochondrial ribosome large subunit (39S) which comprises a 16S rRNA and about 50 distinct proteins.

Its subcellular location is the mitochondrion. The polypeptide is Large ribosomal subunit protein bL27m (MRPL27) (Bos taurus (Bovine)).